Here is a 373-residue protein sequence, read N- to C-terminus: MAQESPKNSAAEIPVTSNGEVDDAHEHGYNRDLKHSLPSGLGLSETQITSHGFDSTKEGVTEAGAPQGSSAPPLPCVLSPSRVAASKLTQQAGDLTVPAGGQRTHTKGGPVILADEIKNPAMEKLELVRKWSLNTYKCTRQIISEKLGRGSRTVDLELEAQIDILRDNKKKYENILKLAQTLSTQLFQMVHTQKQLGDAFADLSLKSLELHEEFGYNADTQKLLAKNGETLLGAINFFIASVNTLVNKTIEDTLMTVKQYENARVEYDAYRTDLEELNLGPRDANTLPKIEQSQHLFQIHKEKYDKMRSDVSVKLKFLEENKVKVLRNQLVLFHSAVAAYFAGNQKQLELTLKQFHVRLKTPGVDAPSWLEEQ.

Residues 1-47 (MAQESPKNSAAEIPVTSNGEVDDAHEHGYNRDLKHSLPSGLGLSETQ) are disordered. Alanine 2 carries the N-acetylalanine modification. Residue serine 5 is modified to Phosphoserine. A compositionally biased stretch (basic and acidic residues) spans 22 to 35 (DDAHEHGYNRDLKH). 5 positions are modified to phosphoserine: serine 36, serine 39, serine 69, serine 79, and serine 132. Residues 153-353 (TVDLELEAQI…NQKQLELTLK (201 aa)) form the AH domain. Threonine 361 bears the Phosphothreonine mark.

Forms homodimers or heterodimers with ARFIP2. Interacts with non-myristoylated GTP-bound ARF3, but not to GDP-bound ARF3. Interacts with ARF1. Binds with lower affinity to ARF5 and with very little affinity to ARF6. Interacts with ARL1. Interacts with ATG9A. Post-translationally, phosphorylated by PRKD1; phosphorylation delocalizes ARFIP1 from the Golgi and disrupts its ability to inhibit the activity of ADP-ribosylation factor, an important component of the vesicle scission machinery.

Its subcellular location is the golgi apparatus. It is found in the trans-Golgi network membrane. In terms of biological role, plays a role in controlling biogenesis of secretory granules at the trans-Golgi network. Mechanistically, binds ARF-GTP at the neck of a growing secretory granule precursor and forms a protective scaffold. Once the granule precursor has been completely loaded, active PRKD1 phosphorylates ARFIP1 and releases it from ARFs. In turn, ARFs induce fission. Through this mechanism, ensures proper secretory granule formation at the Golgi of pancreatic beta cells. This Mus musculus (Mouse) protein is Arfaptin-1.